The sequence spans 141 residues: MTNKGRAGTGPAPCPCGNGAYDTCCGRFHRGEASPPTAEALMRSRYSAYVLGDVSWLRQTWHASTCPPDLSADPGTNWLGLTVKSHAQQDATHATVEFVARYKVGGRAHRLHELSRFVFESREPGEASRWLYVDGDLREPA.

This sequence belongs to the UPF0225 family.

The protein is UPF0225 protein Rmet_0111 of Cupriavidus metallidurans (strain ATCC 43123 / DSM 2839 / NBRC 102507 / CH34) (Ralstonia metallidurans).